Reading from the N-terminus, the 353-residue chain is DNA polymerase IV (353 aa).

One can recognise a UmuC domain in the interval I4–G185. D8 and D103 together coordinate Mg(2+). E104 is a catalytic residue.

It belongs to the DNA polymerase type-Y family. In terms of assembly, monomer. It depends on Mg(2+) as a cofactor.

It is found in the cytoplasm. The enzyme catalyses DNA(n) + a 2'-deoxyribonucleoside 5'-triphosphate = DNA(n+1) + diphosphate. In terms of biological role, poorly processive, error-prone DNA polymerase involved in untargeted mutagenesis. Copies undamaged DNA at stalled replication forks, which arise in vivo from mismatched or misaligned primer ends. These misaligned primers can be extended by PolIV. Exhibits no 3'-5' exonuclease (proofreading) activity. May be involved in translesional synthesis, in conjunction with the beta clamp from PolIII. This is DNA polymerase IV from Serratia proteamaculans (strain 568).